Reading from the N-terminus, the 388-residue chain is Formate-dependent phosphoribosylglycinamide formyltransferase (388 aa).

Residues 21 to 22 (EL) and glutamate 81 each bind N(1)-(5-phospho-beta-D-ribosyl)glycinamide. Residues arginine 113, lysine 154, 159-164 (SSGHGQ), 193-196 (EEFI), and glutamate 201 contribute to the ATP site. The 189-residue stretch at 118-306 (KFAAEELGLK…EFALHVRAVL (189 aa)) folds into the ATP-grasp domain. Mg(2+)-binding residues include glutamate 265 and glutamate 277. N(1)-(5-phospho-beta-D-ribosyl)glycinamide is bound by residues aspartate 284, lysine 352, and 359–360 (RR).

It belongs to the PurK/PurT family. Homodimer.

It carries out the reaction N(1)-(5-phospho-beta-D-ribosyl)glycinamide + formate + ATP = N(2)-formyl-N(1)-(5-phospho-beta-D-ribosyl)glycinamide + ADP + phosphate + H(+). It functions in the pathway purine metabolism; IMP biosynthesis via de novo pathway; N(2)-formyl-N(1)-(5-phospho-D-ribosyl)glycinamide from N(1)-(5-phospho-D-ribosyl)glycinamide (formate route): step 1/1. Functionally, involved in the de novo purine biosynthesis. Catalyzes the transfer of formate to 5-phospho-ribosyl-glycinamide (GAR), producing 5-phospho-ribosyl-N-formylglycinamide (FGAR). Formate is provided by PurU via hydrolysis of 10-formyl-tetrahydrofolate. In Nitratiruptor sp. (strain SB155-2), this protein is Formate-dependent phosphoribosylglycinamide formyltransferase.